Reading from the N-terminus, the 260-residue chain is Cell wall synthesis protein Wag31 (260 aa).

Residues 31–64 (FLDLVENELTRLIEENSDLRQRINELDQELAAGG) adopt a coiled-coil conformation. T73 is subject to Phosphothreonine. The stretch at 161–196 (MLADAQSRSEAQLRQAQEKADALQADAERKHSEIMG) forms a coiled coil. Residues 233-260 (ELGQRGSAAPVDSNADAGGFDQFNRGKN) form a disordered region.

Belongs to the DivIVA family. In terms of assembly, forms homooligomers. Phosphorylated by PknA. Phosphorylation enhances polar localization, which in turn heightens polar peptidoglycan biosynthesis.

The protein resides in the cytoplasm. Important for maintaining cell shape and cell wall integrity by localizing peptidoglycan synthesis to the cell poles. The chain is Cell wall synthesis protein Wag31 (wag31) from Mycobacterium tuberculosis (strain CDC 1551 / Oshkosh).